Reading from the N-terminus, the 26-residue chain is uncharacterized protein (26 aa).

This is an uncharacterized protein from Saccharomyces cerevisiae (strain ATCC 204508 / S288c) (Baker's yeast).